A 223-amino-acid chain; its full sequence is MKRTKSIHHASFRKSWGARHLTPVALAVTAVFMLAGCEKSDETVSLYQNADDCSAANPGKSAECTTAYNNALKEAERTAPKYATREDCVAEFGEGQCQQAPAQAGMAPENQAQAQQSSGSFWMPLMAGYMMGRLMGGGAGFAQQPLFSSKNPASPAYGKYTDAAGKNYGAAQPGRTMTVPKTAMAPKPATTTTVTRGGFGESVAKQSTMQRSAAGTSTRSMGG.

The segment covering 178 to 195 (TVPKTAMAPKPATTTTVT) has biased composition (low complexity). The segment at 178-223 (TVPKTAMAPKPATTTTVTRGGFGESVAKQSTMQRSAAGTSTRSMGG) is disordered. Positions 204-223 (AKQSTMQRSAAGTSTRSMGG) are enriched in polar residues.

This sequence belongs to the UPF0441 family.

The protein is UPF0441 protein YgiB of Salmonella heidelberg (strain SL476).